A 326-amino-acid chain; its full sequence is DNA-directed RNA polymerase subunit alpha (326 aa).

Residues 1 to 231 form an alpha N-terminal domain (alpha-NTD) region; the sequence is MQTALLKPKI…DQLSVFAALE (231 aa). The tract at residues 247-326 is alpha C-terminal domain (alpha-CTD); sequence IDPILLRPVD…ENWPPAGLDK (80 aa).

It belongs to the RNA polymerase alpha chain family. As to quaternary structure, homodimer. The RNAP catalytic core consists of 2 alpha, 1 beta, 1 beta' and 1 omega subunit. When a sigma factor is associated with the core the holoenzyme is formed, which can initiate transcription.

The catalysed reaction is RNA(n) + a ribonucleoside 5'-triphosphate = RNA(n+1) + diphosphate. In terms of biological role, DNA-dependent RNA polymerase catalyzes the transcription of DNA into RNA using the four ribonucleoside triphosphates as substrates. In Cupriavidus pinatubonensis (strain JMP 134 / LMG 1197) (Cupriavidus necator (strain JMP 134)), this protein is DNA-directed RNA polymerase subunit alpha.